The chain runs to 509 residues: Src substrate cortactin (509 aa).

The disordered stretch occupies residues 1–28 (MWKASAGHAVSITQDDGGADDWETDPDF). The segment covering 17 to 28 (GGADDWETDPDF) has biased composition (acidic residues). Cortactin repeat units lie at residues 80–116 (ASHG…SQVD), 117–153 (SVRG…SQKD), 154–190 (YSSG…SQKD), 191–227 (YSKG…SQKD), and 228–264 (YVKG…SQKD). An N6-acetyllysine mark is found at lysine 87 and lysine 107. The residue at position 113 (serine 113) is a Phosphoserine. Arginine 119 carries the omega-N-methylarginine modification. N6-acetyllysine is present on lysine 124. An N6-acetyllysine; alternate modification is found at lysine 144. Lysine 144 participates in a covalent cross-link: Glycyl lysine isopeptide (Lys-Gly) (interchain with G-Cter in SUMO1); alternate. Lysine 144 participates in a covalent cross-link: Glycyl lysine isopeptide (Lys-Gly) (interchain with G-Cter in SUMO2); alternate. Serine 150 is modified (phosphoserine). Residues lysine 152, lysine 161, and lysine 171 each carry the N6-acetyllysine modification. Lysine 181 bears the N6-acetyllysine; alternate mark. A Glycyl lysine isopeptide (Lys-Gly) (interchain with G-Cter in SUMO1); alternate cross-link involves residue lysine 181. A Glycyl lysine isopeptide (Lys-Gly) (interchain with G-Cter in SUMO2); alternate cross-link involves residue lysine 181. Lysine 193 and lysine 198 each carry N6-acetyllysine. Lysine 218 participates in a covalent cross-link: Glycyl lysine isopeptide (Lys-Gly) (interchain with G-Cter in SUMO1). The residue at position 235 (lysine 235) is an N6-acetyllysine. Serine 261 carries the phosphoserine modification. Residues 265–287 (YAKGFGGKYGVQKDRMDKNASTF) form a Cortactin 6; truncated repeat. Residues lysine 267, lysine 272, lysine 277, and lysine 309 each carry the N6-acetyllysine modification. The stretch at 311 to 364 (SNIRANFENLAKEREQEDRRKAEAERAQRMAQERQEQEEARRKLEEQARAKKQT) forms a coiled coil. Positions 318 to 409 (ENLAKEREQE…EPEPEYSTEA (92 aa)) are disordered. A compositionally biased stretch (basic and acidic residues) spans 320–359 (LAKEREQEDRRKAEAERAQRMAQERQEQEEARRKLEEQAR). Threonine 364 carries the post-translational modification Phosphothreonine. Phosphoserine occurs at positions 368, 370, 380, and 381. Tyrosine 384 bears the Phosphotyrosine; by FAK1 mark. Positions 393–406 (EPSYGSSEPEPEYS) are enriched in low complexity. Residue tyrosine 405 is modified to Phosphotyrosine. Serine 406 carries the post-translational modification Phosphoserine. Tyrosine 429 and tyrosine 445 each carry phosphotyrosine; by FAK1. Phosphotyrosine; by SRC is present on residues tyrosine 445 and tyrosine 448. One can recognise an SH3 domain in the interval 451-509 (DLGITAIALYDYQAAGDDEISFDPDDVITNIEMIDDGWWRGVCKGRYGLFPANYVELRQ).

Part of a complex composed of NEDD9, AURKA and CTTN; within the complex NEDD9 acts as a scaffold protein and is required for complex formation. Interacts (via N-terminus) with NEDD9. Identified in a complex containing FGFR4, NCAM1, CDH2, PLCG1, FRS2, SRC, SHC1, GAP43 and CTTN. Forms a complex with ABL1 and MYLK. Interacts with SHANK2 and SHANK3 (via its SH3 domain). Interacts with PLXDC2 and SRCIN1. Interacts with SAMSN1 (via SH3 domain). Interacts (via SH3 domain) with ASAP1 (via Pro-rich region). Interacts with FER. Interacts with FGD1. Interacts with ABL2. Interacts with CTTNBP2NL; this interaction may target CTTN to stress fibers. Interacts with CTTNBP2; this interaction may target CTTN at the cell cortex or dendritic spines. Interacts (via SH3 domain) with DNM2. Interacts with ACTN1. Interacts with KCNA2 (via non-phosphorylated C-terminus). Interacts with PTK2/FAK1. Interacts with KCNH1. Interacts (via SH3 domain) with DIP2A (via N-terminus); the interaction enhances CTTN acetylation and is required for proper synaptic transmission. Interacts with XIRP1 (via N-terminus); the interaction promotes CTTN localization to intercalated disks in cardiomyocytes. Acetylated. Post-translationally, phosphorylated by FER. Phosphorylated in response to FGR activation. Phosphorylation by SRC promotes MYLK binding. Tyrosine phosphorylation in transformed cells may contribute to cellular growth regulation and transformation. Phosphorylated by PKN2 at both serine and threonine residues in a GTP-bound Rac1-dependent manner in hyaluronan-induced astrocytes and hence down-regulated CTTN ability to associate with filamentous actin. Phosphorylated on tyrosine residues in response to CHRM1 activation. Phosphorylated by PTK2/FAK1 in response to cell adhesion. As to expression, detected in liver (at protein level).

The protein resides in the cytoplasm. It is found in the cytoskeleton. It localises to the cell projection. Its subcellular location is the lamellipodium. The protein localises to the ruffle. The protein resides in the dendrite. It is found in the cell membrane. It localises to the podosome. Its subcellular location is the cell junction. The protein localises to the focal adhesion. The protein resides in the membrane. It is found in the clathrin-coated pit. It localises to the dendritic spine. Its subcellular location is the cell cortex. The protein localises to the endoplasmic reticulum. Contributes to the organization of the actin cytoskeleton and cell shape. Plays a role in the formation of lamellipodia and in cell migration. Plays a role in the regulation of neuron morphology, axon growth and formation of neuronal growth cones. Through its interaction with CTTNBP2, involved in the regulation of neuronal spine density. Plays a role in focal adhesion assembly and turnover. In complex with ABL1 and MYLK regulates cortical actin-based cytoskeletal rearrangement critical to sphingosine 1-phosphate (S1P)-mediated endothelial cell (EC) barrier enhancement. Plays a role in intracellular protein transport and endocytosis, and in modulating the levels of potassium channels present at the cell membrane. Plays a role in receptor-mediated endocytosis via clathrin-coated pits. Required for stabilization of KCNH1 channels at the cell membrane. The chain is Src substrate cortactin from Rattus norvegicus (Rat).